The following is a 163-amino-acid chain: Ribonuclease P protein subunit p25-like protein (163 aa).

Disordered stretches follow at residues 1-22 and 129-163; these read MEHYRKAGSVELPAPSPMPQLP and NEYGYQPPGAPPDLGPTPASSCGPQPRRRARDTRF. Over residues 154-163 the composition is skewed to basic residues; the sequence is PRRRARDTRF.

The protein belongs to the histone-like Alba family.

The protein resides in the nucleus. Its function is as follows. May be a component of ribonuclease P or MRP. This Bos taurus (Bovine) protein is Ribonuclease P protein subunit p25-like protein (RPP25L).